Here is a 430-residue protein sequence, read N- to C-terminus: Inner membrane transport protein YbaT (430 aa).

The Cytoplasmic segment spans residues 1–14; sequence MMNTEGNNGNKPLG. A helical transmembrane segment spans residues 15 to 35; the sequence is LWNVVSIGIGAMVGAGIFALL. Residues 36 to 38 lie on the Periplasmic side of the membrane; the sequence is GQA. Residues 39-59 traverse the membrane as a helical segment; the sequence is ALLMEASTWVAFAFGGIVAMF. Residues 60-88 lie on the Cytoplasmic side of the membrane; sequence SGYAYARLGASYPSNGGIIDFFRRGLGNG. The helical transmembrane segment at 89–109 threads the bilayer; sequence VFSLALSLLYLLTLAVSIAMV. The Periplasmic segment spans residues 110–128; that stretch reads ARAFGAYAVQFLHEGSQEE. Residues 129 to 149 traverse the membrane as a helical segment; the sequence is HLILLYALGIIAVMTLFNSLS. Residues 150–157 are Cytoplasmic-facing; the sequence is NHAVGRLE. Residues 158–178 form a helical membrane-spanning segment; the sequence is VILVGIKMMILLLLIIAGVWS. Residues 179–192 lie on the Periplasmic side of the membrane; the sequence is LQPAHISVSAPPSS. The helical transmembrane segment at 193–213 threads the bilayer; the sequence is GAFFSCIGITFLAYAGFGMMA. The Cytoplasmic portion of the chain corresponds to 214–228; sequence NAADKVKDPQVIMPR. A helical membrane pass occupies residues 229–249; the sequence is AFLVAIGVTTLLYISLALVLL. Residues 250–272 are Periplasmic-facing; the sequence is SDVSALELEKYADTAVAQAASPL. Residues 273 to 293 form a helical membrane-spanning segment; the sequence is LGHVGYVIVVIGALLATASAI. Residues 294–325 lie on the Cytoplasmic side of the membrane; it reads NANLFAVFNIMDNMGSERELPKLMNKSLWRQS. The helical transmembrane segment at 326–346 threads the bilayer; that stretch reads TWGNIIVVVLIMLMTAALNLG. Residue S347 is a topological domain, periplasmic. A helical transmembrane segment spans residues 348 to 368; that stretch reads LASVASATFLICYLAVFVVAI. Topologically, residues 369 to 379 are cytoplasmic; it reads RLRHDIHASLP. Residues 380-400 form a helical membrane-spanning segment; it reads ILIVGTLVMLLVIVGFIYSLW. At 401 to 403 the chain is on the periplasmic side; the sequence is SQG. The helical transmembrane segment at 404-424 threads the bilayer; sequence SRALIWIIGSLLLSLIVAMVM. Residues 425 to 430 lie on the Cytoplasmic side of the membrane; it reads KRNKTV.

Belongs to the amino acid-polyamine-organocation (APC) superfamily.

The protein resides in the cell inner membrane. In terms of biological role, probable amino-acid or metabolite transport protein. The protein is Inner membrane transport protein YbaT (ybaT) of Escherichia coli (strain K12).